The chain runs to 331 residues: Ketol-acid reductoisomerase (NADP(+)) (331 aa).

One can recognise a KARI N-terminal Rossmann domain in the interval 2–182 (AQLFYDSDAD…GGTRAGILET (181 aa)). Residues 25–28 (YGSQ), S51, S53, and 83–86 (DEFQ) each bind NADP(+). H108 is an active-site residue. Residue G134 participates in NADP(+) binding. In terms of domain architecture, KARI C-terminal knotted spans 183-328 (NFKEETETDL…KGLRSMFSWL (146 aa)). Mg(2+) contacts are provided by D191, E195, E227, and E231. Residue S252 participates in substrate binding.

It belongs to the ketol-acid reductoisomerase family. The cofactor is Mg(2+).

The catalysed reaction is (2R)-2,3-dihydroxy-3-methylbutanoate + NADP(+) = (2S)-2-acetolactate + NADPH + H(+). The enzyme catalyses (2R,3R)-2,3-dihydroxy-3-methylpentanoate + NADP(+) = (S)-2-ethyl-2-hydroxy-3-oxobutanoate + NADPH + H(+). It participates in amino-acid biosynthesis; L-isoleucine biosynthesis; L-isoleucine from 2-oxobutanoate: step 2/4. The protein operates within amino-acid biosynthesis; L-valine biosynthesis; L-valine from pyruvate: step 2/4. Functionally, involved in the biosynthesis of branched-chain amino acids (BCAA). Catalyzes an alkyl-migration followed by a ketol-acid reduction of (S)-2-acetolactate (S2AL) to yield (R)-2,3-dihydroxy-isovalerate. In the isomerase reaction, S2AL is rearranged via a Mg-dependent methyl migration to produce 3-hydroxy-3-methyl-2-ketobutyrate (HMKB). In the reductase reaction, this 2-ketoacid undergoes a metal-dependent reduction by NADPH to yield (R)-2,3-dihydroxy-isovalerate. The sequence is that of Ketol-acid reductoisomerase (NADP(+)) from Synechococcus sp. (strain CC9902).